We begin with the raw amino-acid sequence, 130 residues long: Large-conductance mechanosensitive channel (130 aa).

The Cytoplasmic portion of the chain corresponds to 1–14 (MWNEFKAFAMRGNI). The helical transmembrane segment at 15-43 (VDLAIGVVIGGAFGKIVTSLVNDIIMPLV) threads the bilayer. Residues 44–65 (GLLLGGLDFSGLSFTFGDAVVK) are Extracellular-facing. Residues 66 to 85 (YGSFIQTIVNFLIISFSIFI) traverse the membrane as a helical segment. Residues 86–130 (VIRTLNGLRRKKEAEEEAAEEAVDAQEELLKEIRDLLKQQAKSPE) are Cytoplasmic-facing.

The protein belongs to the MscL family. As to quaternary structure, homopentamer.

The protein resides in the cell membrane. In terms of biological role, channel that opens in response to stretch forces in the membrane lipid bilayer. Forms a nonselective ion channel with a conductance of about 4 nanosiemens. May participate in the regulation of osmotic pressure changes within the cell. In Bacillus subtilis (strain 168), this protein is Large-conductance mechanosensitive channel.